Here is a 139-residue protein sequence, read N- to C-terminus: ATP synthase epsilon chain (139 aa).

This sequence belongs to the ATPase epsilon chain family. As to quaternary structure, F-type ATPases have 2 components, CF(1) - the catalytic core - and CF(0) - the membrane proton channel. CF(1) has five subunits: alpha(3), beta(3), gamma(1), delta(1), epsilon(1). CF(0) has three main subunits: a, b and c.

The protein localises to the cell inner membrane. Its function is as follows. Produces ATP from ADP in the presence of a proton gradient across the membrane. This Erwinia tasmaniensis (strain DSM 17950 / CFBP 7177 / CIP 109463 / NCPPB 4357 / Et1/99) protein is ATP synthase epsilon chain.